The chain runs to 115 residues: Large ribosomal subunit protein uL24 (115 aa).

The protein belongs to the universal ribosomal protein uL24 family. Part of the 50S ribosomal subunit.

Functionally, one of two assembly initiator proteins, it binds directly to the 5'-end of the 23S rRNA, where it nucleates assembly of the 50S subunit. One of the proteins that surrounds the polypeptide exit tunnel on the outside of the subunit. The sequence is that of Large ribosomal subunit protein uL24 from Phytoplasma mali (strain AT).